The chain runs to 376 residues: Phosphoserine aminotransferase (376 aa).

R42 lines the L-glutamate pocket. Residues W104, T163, D188, and Q211 each coordinate pyridoxal 5'-phosphate. K212 is subject to N6-(pyridoxal phosphate)lysine. Position 253-254 (253-254 (NT)) interacts with pyridoxal 5'-phosphate.

Belongs to the class-V pyridoxal-phosphate-dependent aminotransferase family. SerC subfamily. Homodimer. Requires pyridoxal 5'-phosphate as cofactor.

It is found in the cytoplasm. The catalysed reaction is O-phospho-L-serine + 2-oxoglutarate = 3-phosphooxypyruvate + L-glutamate. It catalyses the reaction 4-(phosphooxy)-L-threonine + 2-oxoglutarate = (R)-3-hydroxy-2-oxo-4-phosphooxybutanoate + L-glutamate. Its pathway is amino-acid biosynthesis; L-serine biosynthesis; L-serine from 3-phospho-D-glycerate: step 2/3. It functions in the pathway cofactor biosynthesis; pyridoxine 5'-phosphate biosynthesis; pyridoxine 5'-phosphate from D-erythrose 4-phosphate: step 3/5. Its function is as follows. Catalyzes the reversible conversion of 3-phosphohydroxypyruvate to phosphoserine and of 3-hydroxy-2-oxo-4-phosphonooxybutanoate to phosphohydroxythreonine. The protein is Phosphoserine aminotransferase of Bordetella avium (strain 197N).